Here is a 180-residue protein sequence, read N- to C-terminus: Nucleoside-triphosphatase THEP1 (180 aa).

ATP contacts are provided by residues 9-16 (GPAGVGKT) and 104-111 (LIVIDEIG).

This sequence belongs to the THEP1 NTPase family.

It catalyses the reaction a ribonucleoside 5'-triphosphate + H2O = a ribonucleoside 5'-diphosphate + phosphate + H(+). Its function is as follows. Has nucleotide phosphatase activity towards ATP, GTP, CTP, TTP and UTP. May hydrolyze nucleoside diphosphates with lower efficiency. This Thermococcus kodakarensis (strain ATCC BAA-918 / JCM 12380 / KOD1) (Pyrococcus kodakaraensis (strain KOD1)) protein is Nucleoside-triphosphatase THEP1.